A 580-amino-acid chain; its full sequence is 2-succinyl-5-enolpyruvyl-6-hydroxy-3-cyclohexene-1-carboxylate synthase (580 aa).

It belongs to the TPP enzyme family. MenD subfamily. Homodimer. Mg(2+) is required as a cofactor. It depends on Mn(2+) as a cofactor. The cofactor is thiamine diphosphate.

The enzyme catalyses isochorismate + 2-oxoglutarate + H(+) = 5-enolpyruvoyl-6-hydroxy-2-succinyl-cyclohex-3-ene-1-carboxylate + CO2. It functions in the pathway quinol/quinone metabolism; 1,4-dihydroxy-2-naphthoate biosynthesis; 1,4-dihydroxy-2-naphthoate from chorismate: step 2/7. Its pathway is quinol/quinone metabolism; menaquinone biosynthesis. Its function is as follows. Catalyzes the thiamine diphosphate-dependent decarboxylation of 2-oxoglutarate and the subsequent addition of the resulting succinic semialdehyde-thiamine pyrophosphate anion to isochorismate to yield 2-succinyl-5-enolpyruvyl-6-hydroxy-3-cyclohexene-1-carboxylate (SEPHCHC). The polypeptide is 2-succinyl-5-enolpyruvyl-6-hydroxy-3-cyclohexene-1-carboxylate synthase (Listeria welshimeri serovar 6b (strain ATCC 35897 / DSM 20650 / CCUG 15529 / CIP 8149 / NCTC 11857 / SLCC 5334 / V8)).